A 535-amino-acid polypeptide reads, in one-letter code: Bifunctional purine biosynthesis protein PurH (535 aa).

Residues 6 to 151 enclose the MGS-like domain; sequence TRLPVRRALI…KNHKDVAIVV (146 aa).

Belongs to the PurH family.

It carries out the reaction (6R)-10-formyltetrahydrofolate + 5-amino-1-(5-phospho-beta-D-ribosyl)imidazole-4-carboxamide = 5-formamido-1-(5-phospho-D-ribosyl)imidazole-4-carboxamide + (6S)-5,6,7,8-tetrahydrofolate. The enzyme catalyses IMP + H2O = 5-formamido-1-(5-phospho-D-ribosyl)imidazole-4-carboxamide. The protein operates within purine metabolism; IMP biosynthesis via de novo pathway; 5-formamido-1-(5-phospho-D-ribosyl)imidazole-4-carboxamide from 5-amino-1-(5-phospho-D-ribosyl)imidazole-4-carboxamide (10-formyl THF route): step 1/1. Its pathway is purine metabolism; IMP biosynthesis via de novo pathway; IMP from 5-formamido-1-(5-phospho-D-ribosyl)imidazole-4-carboxamide: step 1/1. This chain is Bifunctional purine biosynthesis protein PurH, found in Pseudomonas putida (strain GB-1).